The primary structure comprises 400 residues: Large envelope protein (400 aa).

Methionine 1 is subject to N-acetylmethionine. Glycine 2 carries the N-myristoyl glycine; by host lipid modification. Residues 2-119 (GGWSSKHRKG…PPLRDTHPQA (118 aa)) form a pre-S1 region. Residues 2-174 (GGWSSKHRKG…FTKTGDPASN (173 aa)) are pre-S. At 2 to 181 (GGWSSKHRKG…ASNMESTTSG (180 aa)) the chain is on the virion surface; in external conformation side. At 2–253 (GGWSSKHRKG…PGYRWMCLRR (252 aa)) the chain is on the intravirion; in internal conformation side. Residue tryptophan 4 is glycosylated (N-linked (GlcNAc...) asparagine). The interval 89-117 (PAAPPPASTNRQSGRQPTPISPPLRDTHP) is disordered. The segment covering 96–106 (STNRQSGRQPT) has biased composition (polar residues). The segment at 120–174 (MQWNSTAFHQALQDPRVRGLYFPAGGSSSGTVNPVPNTVSHISSIFTKTGDPASN) is pre-S2. The helical transmembrane segment at 182–202 (FLGPLLVLQAGFFLLTRILTI) threads the bilayer. Residues 203–253 (PQSLDSWWTSLNFLGGAPGCIGQNSQSQTSNHSPTSCPPTCPGYRWMCLRR) are Intravirion; in external conformation-facing. Residues 254 to 274 (FIIFLFILLLCLIFLLVLLDY) form a helical membrane-spanning segment. At 275 to 348 (QGMLPVCPLL…WASVRFSWLS (74 aa)) the chain is on the virion surface side. Residue asparagine 320 is glycosylated (N-linked (GlcNAc...) asparagine; by host). A helical transmembrane segment spans residues 349-369 (LLVPFVQWFAGLSPTVWLSVI). At 370–375 (WMIWYW) the chain is on the intravirion side. The helical transmembrane segment at 376 to 398 (GPSLYNILSPFLPLLPIFLCLWV) threads the bilayer. The Virion surface segment spans residues 399–400 (YI).

This sequence belongs to the orthohepadnavirus major surface antigen family. As to quaternary structure, in its internal form (Li-HBsAg), interacts with the capsid protein and with the isoform S. Interacts with host chaperone CANX. In terms of assembly, associates with host chaperone CANX through its pre-S2 N glycan; this association may be essential for isoform M proper secretion. Interacts with isoform L. Interacts with the antigens of satellite virus HDV (HDVAgs); this interaction is required for encapsidation of HDV genomic RNA. In terms of processing, isoform M is N-terminally acetylated by host at a ratio of 90%, and N-glycosylated by host at the pre-S2 region. Myristoylated.

It localises to the virion membrane. In terms of biological role, the large envelope protein exists in two topological conformations, one which is termed 'external' or Le-HBsAg and the other 'internal' or Li-HBsAg. In its external conformation the protein attaches the virus to cell receptors and thereby initiating infection. This interaction determines the species specificity and liver tropism. This attachment induces virion internalization predominantly through caveolin-mediated endocytosis. The large envelope protein also assures fusion between virion membrane and endosomal membrane. In its internal conformation the protein plays a role in virion morphogenesis and mediates the contact with the nucleocapsid like a matrix protein. The middle envelope protein plays an important role in the budding of the virion. It is involved in the induction of budding in a nucleocapsid independent way. In this process the majority of envelope proteins bud to form subviral lipoprotein particles of 22 nm of diameter that do not contain a nucleocapsid. The sequence is that of Large envelope protein from Homo sapiens (Human).